We begin with the raw amino-acid sequence, 22 residues long: Motilin (22 aa).

Over residues 1-11 (FVPFFTQSDIQ) the composition is skewed to polar residues. Residues 1–22 (FVPFFTQSDIQKMQEKERNKGQ) are disordered. A compositionally biased stretch (basic and acidic residues) spans 12–22 (KMQEKERNKGQ).

This sequence belongs to the motilin family.

The protein resides in the secreted. Functionally, plays an important role in the regulation of interdigestive gastrointestinal motility and indirectly causes rhythmic contraction of duodenal and colonic smooth muscle. The chain is Motilin (MLN) from Gallus gallus (Chicken).